We begin with the raw amino-acid sequence, 474 residues long: H/ACA ribonucleoprotein complex subunit CBF5 (474 aa).

The Nucleophile role is filled by Asp-94. The region spanning 265–340 (YKRIVVKDSA…VVAKVKRCIM (76 aa)) is the PUA domain. 2 disordered regions span residues 356-375 (QKKKQMKADGKLDKYGRANE) and 390-474 (NAEP…KSKK). Composition is skewed to basic and acidic residues over residues 361–372 (MKADGKLDKYGR) and 400–433 (KSEEKPLIKEVEKKEVEQKEESKEESKTPEEKKD). A run of 9 repeats spans residues 431–433 (KKD), 434–436 (KKE), 437–439 (KKE), 440–442 (KKD), 443–445 (KKE), 446–448 (KKE), 449–451 (KKE), 452–454 (KKE), and 455–457 (KKR). The segment at 431-460 (KKDKKEKKEKKDKKEKKEKKEKKEKKRKAD) is 9 X 3 AA tandem repeats of K-K-[DE]. A compositionally biased stretch (basic residues) spans 434–456 (KKEKKEKKDKKEKKEKKEKKEKK).

This sequence belongs to the pseudouridine synthase TruB family. In terms of assembly, component of the small nucleolar ribonucleoprotein particles containing H/ACA-type snoRNAs (H/ACA snoRNPs).

It localises to the nucleus. It is found in the nucleolus. It carries out the reaction uridine in 5S rRNA = pseudouridine in 5S rRNA. The enzyme catalyses uridine in snRNA = pseudouridine in snRNA. It catalyses the reaction a uridine in mRNA = a pseudouridine in mRNA. In terms of biological role, catalytic subunit of H/ACA small nucleolar ribonucleoprotein (H/ACA snoRNP) complex, which catalyzes pseudouridylation of rRNA. This involves the isomerization of uridine such that the ribose is subsequently attached to C5, instead of the normal N1. Pseudouridine ('psi') residues may serve to stabilize the conformation of rRNAs and play a central role in ribosomal RNA processing. The H/ACA snoRNP complex also mediates pseudouridylation of other types of RNAs. Catalyzes pseudouridylation at position 93 in U2 snRNA. Also catalyzes pseudouridylation of mRNAs; H/ACA-type snoRNAs probably guide pseudouridylation of mRNAs. The sequence is that of H/ACA ribonucleoprotein complex subunit CBF5 (CBF5) from Kluyveromyces lactis (strain ATCC 8585 / CBS 2359 / DSM 70799 / NBRC 1267 / NRRL Y-1140 / WM37) (Yeast).